The primary structure comprises 101 residues: NADH-quinone oxidoreductase subunit K (101 aa).

A run of 3 helical transmembrane segments spans residues 4–24 (LTHF…GIFL), 30–50 (IILL…FIAF), and 61–81 (IFVF…LAIL).

The protein belongs to the complex I subunit 4L family. As to quaternary structure, NDH-1 is composed of 14 different subunits. Subunits NuoA, H, J, K, L, M, N constitute the membrane sector of the complex.

It is found in the cell inner membrane. The enzyme catalyses a quinone + NADH + 5 H(+)(in) = a quinol + NAD(+) + 4 H(+)(out). In terms of biological role, NDH-1 shuttles electrons from NADH, via FMN and iron-sulfur (Fe-S) centers, to quinones in the respiratory chain. The immediate electron acceptor for the enzyme in this species is believed to be ubiquinone. Couples the redox reaction to proton translocation (for every two electrons transferred, four hydrogen ions are translocated across the cytoplasmic membrane), and thus conserves the redox energy in a proton gradient. In Chromobacterium violaceum (strain ATCC 12472 / DSM 30191 / JCM 1249 / CCUG 213 / NBRC 12614 / NCIMB 9131 / NCTC 9757 / MK), this protein is NADH-quinone oxidoreductase subunit K.